The chain runs to 335 residues: Geranylgeranyl pyrophosphate synthase BTS1 (335 aa).

Positions 36, 39, and 68 each coordinate isopentenyl diphosphate. Positions 75 and 79 each coordinate Mg(2+). R84 provides a ligand contact to dimethylallyl diphosphate. R85 contributes to the isopentenyl diphosphate binding site. Residues K169, T170, Q206, N213, K223, and K233 each coordinate dimethylallyl diphosphate.

It belongs to the FPP/GGPP synthase family. It depends on Mg(2+) as a cofactor.

Its subcellular location is the cytoplasm. It carries out the reaction isopentenyl diphosphate + dimethylallyl diphosphate = (2E)-geranyl diphosphate + diphosphate. The catalysed reaction is isopentenyl diphosphate + (2E)-geranyl diphosphate = (2E,6E)-farnesyl diphosphate + diphosphate. It catalyses the reaction isopentenyl diphosphate + (2E,6E)-farnesyl diphosphate = (2E,6E,10E)-geranylgeranyl diphosphate + diphosphate. It functions in the pathway isoprenoid biosynthesis; farnesyl diphosphate biosynthesis; farnesyl diphosphate from geranyl diphosphate and isopentenyl diphosphate: step 1/1. Its pathway is isoprenoid biosynthesis; geranyl diphosphate biosynthesis; geranyl diphosphate from dimethylallyl diphosphate and isopentenyl diphosphate: step 1/1. The protein operates within isoprenoid biosynthesis; geranylgeranyl diphosphate biosynthesis; geranylgeranyl diphosphate from farnesyl diphosphate and isopentenyl diphosphate: step 1/1. Its function is as follows. Catalyzes the trans-addition of the 3 molecules of IPP onto DMAPP to form geranylgeranyl pyrophosphate. Required for the membrane attachment of YPT1 and SEC4. May be involved in vesicle trafficking and protein sorting. This is Geranylgeranyl pyrophosphate synthase BTS1 (BTS1) from Saccharomyces cerevisiae (strain ATCC 204508 / S288c) (Baker's yeast).